A 548-amino-acid polypeptide reads, in one-letter code: Eukaryotic translation initiation factor 3 subunit D (548 aa).

Lys53 carries the N6-acetyllysine modification. Ser161 is modified (phosphoserine). Residues 285–299 (DFDLPTVSETANEPP) are RNA gate. Disordered stretches follow at residues 288 to 309 (LPTV…FNSP) and 523 to 548 (PDGT…EEET). Positions 291-309 (VSETANEPPQDEGNSFNSP) are enriched in polar residues. A phosphoserine mark is found at Ser528 and Ser529. Residues 529-548 (SDEDEEEEEEEEEEEEEEET) are compositionally biased toward acidic residues.

The protein belongs to the eIF-3 subunit D family. Component of the eukaryotic translation initiation factor 3 (eIF-3) complex, which is composed of 13 subunits: EIF3A, EIF3B, EIF3C, EIF3D, EIF3E, EIF3F, EIF3G, EIF3H, EIF3I, EIF3J, EIF3K, EIF3L and EIF3M. The eIF-3 complex appears to include 3 stable modules: module A is composed of EIF3A, EIF3B, EIF3G and EIF3I; module B is composed of EIF3F, EIF3H, and EIF3M; and module C is composed of EIF3C, EIF3D, EIF3E, EIF3K and EIF3L. EIF3C of module C binds EIF3B of module A and EIF3H of module B, thereby linking the three modules. EIF3J is a labile subunit that binds to the eIF-3 complex via EIF3B. The eIF-3 complex interacts with RPS6KB1 under conditions of nutrient depletion. Mitogenic stimulation leads to binding and activation of a complex composed of MTOR and RPTOR, leading to phosphorylation and release of RPS6KB1 and binding of EIF4B to eIF-3.

It is found in the cytoplasm. Its function is as follows. mRNA cap-binding component of the eukaryotic translation initiation factor 3 (eIF-3) complex, a complex required for several steps in the initiation of protein synthesis of a specialized repertoire of mRNAs. The eIF-3 complex associates with the 40S ribosome and facilitates the recruitment of eIF-1, eIF-1A, eIF-2:GTP:methionyl-tRNAi and eIF-5 to form the 43S pre-initiation complex (43S PIC). The eIF-3 complex stimulates mRNA recruitment to the 43S PIC and scanning of the mRNA for AUG recognition. The eIF-3 complex is also required for disassembly and recycling of post-termination ribosomal complexes and subsequently prevents premature joining of the 40S and 60S ribosomal subunits prior to initiation. The eIF-3 complex specifically targets and initiates translation of a subset of mRNAs involved in cell proliferation, including cell cycling, differentiation and apoptosis, and uses different modes of RNA stem-loop binding to exert either translational activation or repression. In the eIF-3 complex, EIF3D specifically recognizes and binds the 7-methylguanosine cap of a subset of mRNAs. This is Eukaryotic translation initiation factor 3 subunit D from Pongo abelii (Sumatran orangutan).